The following is a 169-amino-acid chain: MGFEDGFYTILHLAEGQHPNSKIPGGMYASSKDGKDVPVTAEPLGPQSKIRWWIARDPQAGDDMYTITEFRIDNSIPGQWSRSPVETEVPVYLYDRIKAEETGYTCAWRIQPADHGADGVYHIVGNVRIGSTDWADLREEYGEPQVYMKPVPVIPNVYIPRWFILGYEE.

This sequence belongs to the protease inhibitor I85 family.

Its function is as follows. Inhibits papain and cysteine cathepsin endopeptidases, and also inhibits cathepsins B and H, which exhibit both exopeptidase and endopeptidase activities. The sequence is that of Macrocypin-1a from Macrolepiota procera (Parasol mushroom).